Consider the following 240-residue polypeptide: Pyridoxine 5'-phosphate synthase (240 aa).

Position 6 (asparagine 6) interacts with 3-amino-2-oxopropyl phosphate. Residue 8 to 9 (DH) coordinates 1-deoxy-D-xylulose 5-phosphate. Arginine 17 provides a ligand contact to 3-amino-2-oxopropyl phosphate. The Proton acceptor role is filled by histidine 42. The 1-deoxy-D-xylulose 5-phosphate site is built by arginine 44 and histidine 49. The active-site Proton acceptor is the glutamate 69. Threonine 99 contributes to the 1-deoxy-D-xylulose 5-phosphate binding site. Histidine 193 functions as the Proton donor in the catalytic mechanism. 3-amino-2-oxopropyl phosphate-binding positions include glycine 194 and 216 to 217 (GH).

Belongs to the PNP synthase family. As to quaternary structure, homooctamer; tetramer of dimers.

The protein localises to the cytoplasm. It carries out the reaction 3-amino-2-oxopropyl phosphate + 1-deoxy-D-xylulose 5-phosphate = pyridoxine 5'-phosphate + phosphate + 2 H2O + H(+). It functions in the pathway cofactor biosynthesis; pyridoxine 5'-phosphate biosynthesis; pyridoxine 5'-phosphate from D-erythrose 4-phosphate: step 5/5. Catalyzes the complicated ring closure reaction between the two acyclic compounds 1-deoxy-D-xylulose-5-phosphate (DXP) and 3-amino-2-oxopropyl phosphate (1-amino-acetone-3-phosphate or AAP) to form pyridoxine 5'-phosphate (PNP) and inorganic phosphate. This Hydrogenobaculum sp. (strain Y04AAS1) protein is Pyridoxine 5'-phosphate synthase.